The primary structure comprises 454 residues: Probable ECA polymerase (454 aa).

Helical transmembrane passes span 3–23 (LGQFGGLFCIYLIAVIFILTL), 39–59 (FSMLYLLTFYFGFPLTCMLVF), 61–81 (FGVAVVPVEYLLYAMLSATAF), 119–139 (LALVAVGTVGIFFMQNGFLLF), 154–174 (GVALKRFFYFFIPAMLVVYFL), 180–200 (AWFFFLASTVAFGILTYVIVG), 201–221 (GTRANIIIAFSLFLFIGIVRG), 222–242 (WITLWMLAAAGVFGIVGMFWL), 340–360 (LVVMGGVLFIPLGAIVVGLII), 377–397 (YKAAILQSFCFGAVFNIIVLA), and 409–429 (VFFCVIFGACLVLAKLLYWLF).

Belongs to the WzyE family. In terms of assembly, probably part of a complex composed of WzxE, WzyE and WzzE.

Its subcellular location is the cell inner membrane. Its pathway is bacterial outer membrane biogenesis; enterobacterial common antigen biosynthesis. Its function is as follows. Probably involved in the polymerization of enterobacterial common antigen (ECA) trisaccharide repeat units. The polypeptide is Probable ECA polymerase (Yersinia pestis bv. Antiqua (strain Angola)).